A 167-amino-acid polypeptide reads, in one-letter code: MTHGASKTTPETTRAGRQARIVAILSSTSVRSQSELATLLADDGIDVTQATLSRDLEELGAVKLRGADGGVGVYVVPEDGSPVRGVSGGTARLSRLLSELLVSADSSANLAVLRTPPGAADYLASAIDRAALPYVVGTIAGDDTVFVAAREPMTGSELATVLESLNR.

Belongs to the ArgR family.

The protein localises to the cytoplasm. The protein operates within amino-acid biosynthesis; L-arginine biosynthesis [regulation]. Regulates arginine biosynthesis genes. This is Arginine repressor from Mycobacterium leprae (strain Br4923).